A 170-amino-acid chain; its full sequence is Large ribosomal subunit protein uL18c (170 aa).

The transit peptide at 1 to 63 (MLASPALAGA…QADRIARHVR (63 aa)) directs the protein to the chloroplast.

The protein belongs to the universal ribosomal protein uL18 family. In terms of assembly, part of the 50S ribosomal subunit; contacts the 5S rRNA.

It localises to the plastid. Its subcellular location is the chloroplast. Functionally, binds 5S rRNA, forms part of the central protuberance of the 50S subunit. The protein is Large ribosomal subunit protein uL18c (RPL18) of Oryza sativa subsp. japonica (Rice).